Reading from the N-terminus, the 75-residue chain is Small ribosomal subunit protein bS18 (75 aa).

The protein belongs to the bacterial ribosomal protein bS18 family. As to quaternary structure, part of the 30S ribosomal subunit. Forms a tight heterodimer with protein bS6.

In terms of biological role, binds as a heterodimer with protein bS6 to the central domain of the 16S rRNA, where it helps stabilize the platform of the 30S subunit. This is Small ribosomal subunit protein bS18 from Shewanella denitrificans (strain OS217 / ATCC BAA-1090 / DSM 15013).